The following is a 501-amino-acid chain: Geissoschizine oxidase (501 aa).

The helical transmembrane segment at 1–21 (MEFSFSSPALYIVYFLLFFVV) threads the bilayer. N-linked (GlcNAc...) asparagine glycosylation occurs at Asn60. Cys442 is a binding site for heme.

It belongs to the cytochrome P450 family. Heme is required as a cofactor. In terms of tissue distribution, expressed in leaf epidermis. Also present in the leaf internal phloem-associated parenchyma (IPAP) inside the mesophyll.

The protein localises to the membrane. The enzyme catalyses (19E)-geissoschizine + reduced [NADPH--hemoprotein reductase] + O2 = akuammicine + formate + oxidized [NADPH--hemoprotein reductase] + H2O + H(+). It carries out the reaction (19E)-geissoschizine + reduced [NADPH--hemoprotein reductase] + O2 = 3,17-didehydrostemmadenine + oxidized [NADPH--hemoprotein reductase] + 2 H2O. Its pathway is alkaloid biosynthesis. Functionally, component of the seco-iridoid and derivatives monoterpenoid indole alkaloids (MIAs, e.g. vincristine, quinine, and strychnine) biosynthesis pathway. Catalyzes the oxidation of 19E-geissoschizine to produce a short-lived MIA unstable intermediate which can be spontaneously converted into akuammicine or oxidized by Redox1 and Redox2 to produce stemmadenine and 16S/R-deshydroxymethylstemmadenine (16S/R-DHS). This is Geissoschizine oxidase from Catharanthus roseus (Madagascar periwinkle).